The chain runs to 78 residues: Translation initiation factor IF-1, chloroplastic (78 aa).

Residues 1–72 (MEKQKLIDME…TKGRITYRLR (72 aa)) enclose the S1-like domain.

The protein belongs to the IF-1 family. Component of the 30S ribosomal translation pre-initiation complex which assembles on the 30S ribosome in the order IF-2 and IF-3, IF-1 and N-formylmethionyl-tRNA(fMet); mRNA recruitment can occur at any time during PIC assembly.

It is found in the plastid. It localises to the chloroplast. Functionally, one of the essential components for the initiation of protein synthesis. Stabilizes the binding of IF-2 and IF-3 on the 30S subunit to which N-formylmethionyl-tRNA(fMet) subsequently binds. Helps modulate mRNA selection, yielding the 30S pre-initiation complex (PIC). Upon addition of the 50S ribosomal subunit IF-1, IF-2 and IF-3 are released leaving the mature 70S translation initiation complex. The polypeptide is Translation initiation factor IF-1, chloroplastic (Marchantia polymorpha (Common liverwort)).